A 785-amino-acid polypeptide reads, in one-letter code: Toll-like receptor 2 (785 aa).

An N-terminal signal peptide occupies residues 1–17 (MSRVLWTLWVLGAVTNL). Residues 18–589 (SKEEAPDQSS…RLSVSECHRT (572 aa)) are Extracellular-facing. An intrachain disulfide couples C31 to C37. LRR repeat units follow at residues 54–77 (AVRS…RDCV), 78–101 (NLKA…LSLW), 102–125 (SLEH…RPLS), 126–150 (SLKF…SQLT), 151–175 (NLRI…AGLT), 176–199 (FLEE…KSIQ), 200–223 (NISY…DLSS), 224–250 (SLKH…ETHT), 251–278 (LVKK…NYVS), 279–308 (GVLE…KNIG), 309–337 (QIET…SLTE), 338–361 (DVKR…QHLK), 362–388 (SLEY…DAWP), 389–414 (SLQT…LTLK), 415–437 (NLTN…QWPE), 438–457 (KMKY…GCIP), 458–478 (KTLE…LNLP), 479–500 (QLKE…SLLP), and 501–524 (MLLV…DSFH). N115 carries N-linked (GlcNAc...) asparagine glycosylation. N-linked (GlcNAc...) asparagine glycosylation is found at N200 and N246. C354 and C383 are oxidised to a cystine. N-linked (GlcNAc...) asparagine glycans are attached at residues N415 and N443. An intrachain disulfide couples C433 to C455. The 55-residue stretch at 525 to 579 (TLKTLEAGGNNFICSCEFLSFTQEQQALAKVLIDWPANYLCDSPSHVRGQQVQDV) folds into the LRRCT domain. A helical membrane pass occupies residues 590–610 (ALVSGMCCALFLLILLTEVLC). Residues 611–785 (HRFHGLWYMR…WLNLRTAIKS (175 aa)) lie on the Cytoplasmic side of the membrane. The TIR domain maps to 640 to 783 (VCYDAFVSYS…GFWLNLRTAI (144 aa)). K755 participates in a covalent cross-link: Glycyl lysine isopeptide (Lys-Gly) (interchain with G-Cter in ubiquitin). The ATG16L1-binding motif signature appears at 762-779 (YLEWPTDDAQQEGFWLNL).

Belongs to the Toll-like receptor family. In terms of assembly, interacts with LY96, TLR1 and TLR6 (via extracellular domain). TLR2 seems to exist in heterodimers with either TLR1 or TLR6 before stimulation by the ligand. The heterodimers form bigger oligomers in response to their corresponding ligands as well as further heterotypic associations with other receptors such as CD14 and/or CD36. Binds MYD88 (via TIR domain). Interacts with TICAM1. Interacts with CNPY3. Interacts with ATG16L1. Interacts with PPP1R11. Interacts with TICAM2. Interacts with TIRAP. In terms of processing, ubiquitinated at Lys-755 by PPP1R11, leading to its degradation. Deubiquitinated by USP2. Post-translationally, glycosylation of Asn-443 is critical for secretion of the N-terminal ectodomain of TLR2.

The protein resides in the membrane. The protein localises to the cytoplasmic vesicle. It is found in the phagosome membrane. It localises to the membrane raft. In terms of biological role, cooperates with LY96 to mediate the innate immune response to bacterial lipoproteins and other microbial cell wall components. Cooperates with TLR1 or TLR6 to mediate the innate immune response to bacterial lipoproteins or lipopeptides. Acts via MYD88 and TRAF6, leading to NF-kappa-B activation, cytokine secretion and the inflammatory response. May also promote apoptosis in response to lipoproteins. Forms activation clusters composed of several receptors depending on the ligand, these clusters trigger signaling from the cell surface and subsequently are targeted to the Golgi in a lipid-raft dependent pathway. Forms the cluster TLR2:TLR6:CD14:CD36 in response to diacylated lipopeptides and TLR2:TLR1:CD14 in response to triacylated lipopeptides. The sequence is that of Toll-like receptor 2 (TLR2) from Canis lupus familiaris (Dog).